A 180-amino-acid polypeptide reads, in one-letter code: UPF0227 protein YcfP (180 aa).

It belongs to the UPF0227 family.

This Salmonella gallinarum (strain 287/91 / NCTC 13346) protein is UPF0227 protein YcfP.